The sequence spans 170 residues: Peptide deformylase (170 aa).

Cysteine 91 and histidine 133 together coordinate Fe cation. Glutamate 134 is a catalytic residue. Histidine 137 is a Fe cation binding site.

Belongs to the polypeptide deformylase family. Requires Fe(2+) as cofactor.

It carries out the reaction N-terminal N-formyl-L-methionyl-[peptide] + H2O = N-terminal L-methionyl-[peptide] + formate. Removes the formyl group from the N-terminal Met of newly synthesized proteins. Requires at least a dipeptide for an efficient rate of reaction. N-terminal L-methionine is a prerequisite for activity but the enzyme has broad specificity at other positions. The chain is Peptide deformylase from Histophilus somni (strain 2336) (Haemophilus somnus).